Here is a 217-residue protein sequence, read N- to C-terminus: Probable transaldolase (217 aa).

Lys83 acts as the Schiff-base intermediate with substrate in catalysis.

Belongs to the transaldolase family. Type 3B subfamily.

It is found in the cytoplasm. The catalysed reaction is D-sedoheptulose 7-phosphate + D-glyceraldehyde 3-phosphate = D-erythrose 4-phosphate + beta-D-fructose 6-phosphate. It participates in carbohydrate degradation; pentose phosphate pathway; D-glyceraldehyde 3-phosphate and beta-D-fructose 6-phosphate from D-ribose 5-phosphate and D-xylulose 5-phosphate (non-oxidative stage): step 2/3. Functionally, transaldolase is important for the balance of metabolites in the pentose-phosphate pathway. The protein is Probable transaldolase of Ruegeria sp. (strain TM1040) (Silicibacter sp.).